The sequence spans 500 residues: Probable malate:quinone oxidoreductase (500 aa).

The protein belongs to the MQO family. The cofactor is FAD.

The catalysed reaction is (S)-malate + a quinone = a quinol + oxaloacetate. It functions in the pathway carbohydrate metabolism; tricarboxylic acid cycle; oxaloacetate from (S)-malate (quinone route): step 1/1. The polypeptide is Probable malate:quinone oxidoreductase (Gluconobacter oxydans (strain 621H) (Gluconobacter suboxydans)).